Reading from the N-terminus, the 136-residue chain is Plastocyanin (136 aa).

The N-terminal stretch at 1–34 is a signal peptide; that stretch reads MSLVFNLVKRLQLILLSLVVGGLAVAFLSNPAAA. One can recognise a Plastocyanin-like domain in the interval 35–136; that stretch reads ETYIVKMGSD…GMVGKIIVNG (102 aa). Positions 73, 120, 123, and 128 each coordinate Cu cation.

Belongs to the plastocyanin family. Requires Cu(2+) as cofactor.

It localises to the cellular thylakoid membrane. Its function is as follows. Participates in electron transfer between P700 and the cytochrome b6-f complex in photosystem I. The protein is Plastocyanin of Synechococcus sp. (strain JA-2-3B'a(2-13)) (Cyanobacteria bacterium Yellowstone B-Prime).